Consider the following 433-residue polypeptide: Methylenetetrahydrofolate--tRNA-(uracil-5-)-methyltransferase TrmFO (433 aa).

Position 7-12 (7-12 (GGGLAG)) interacts with FAD.

Belongs to the MnmG family. TrmFO subfamily. FAD serves as cofactor.

It is found in the cytoplasm. The catalysed reaction is uridine(54) in tRNA + (6R)-5,10-methylene-5,6,7,8-tetrahydrofolate + NADH + H(+) = 5-methyluridine(54) in tRNA + (6S)-5,6,7,8-tetrahydrofolate + NAD(+). It catalyses the reaction uridine(54) in tRNA + (6R)-5,10-methylene-5,6,7,8-tetrahydrofolate + NADPH + H(+) = 5-methyluridine(54) in tRNA + (6S)-5,6,7,8-tetrahydrofolate + NADP(+). Its function is as follows. Catalyzes the folate-dependent formation of 5-methyl-uridine at position 54 (M-5-U54) in all tRNAs. This Natranaerobius thermophilus (strain ATCC BAA-1301 / DSM 18059 / JW/NM-WN-LF) protein is Methylenetetrahydrofolate--tRNA-(uracil-5-)-methyltransferase TrmFO.